The following is a 328-amino-acid chain: 3-ketodihydrosphingosine reductase TSC10 (328 aa).

An NADP(+)-binding site is contributed by L16. G19, S21, and G23 together coordinate NADPH. The short motif at 19–23 is the GXSXG element; that stretch reads GASQG. L24 lines the NADP(+) pocket. Residues R44, K48, and D73 each coordinate NADPH. D73 contributes to the NADP(+) binding site. S161 functions as the Proton donor in the catalytic mechanism. 3 residues coordinate NADP(+): Y175, K179, and S210. The active-site Proton acceptor is the Y175. K179 (lowers pKa of active site Tyr) is an active-site residue. A helical membrane pass occupies residues 277–297; it reads FFQVIVSFIFSIIAPIANYVV.

The protein belongs to the short-chain dehydrogenases/reductases (SDR) family.

Its subcellular location is the endoplasmic reticulum membrane. It catalyses the reaction sphinganine + NADP(+) = 3-oxosphinganine + NADPH + H(+). Its pathway is lipid metabolism; sphingolipid metabolism. Functionally, catalyzes the reduction of 3'-oxosphinganine (3-ketodihydrosphingosine/KDS) to sphinganine (dihydrosphingosine/DHS), the second step of de novo sphingolipid biosynthesis. This is 3-ketodihydrosphingosine reductase TSC10 (TSC10) from Debaryomyces hansenii (strain ATCC 36239 / CBS 767 / BCRC 21394 / JCM 1990 / NBRC 0083 / IGC 2968) (Yeast).